Reading from the N-terminus, the 94-residue chain is RING finger protein Z (94 aa).

The segment at 1 to 22 is disordered; the sequence is MGNCNKPPKRPPNTQTSAAQPS. The N-myristoyl glycine; by host moiety is linked to residue Gly-2. The segment at 39–75 adopts an RING-type; atypical zinc-finger fold; sequence CKCCWFADTNLITCNDHYLCLRCHQTMLRNSELCHIC. Positions 89-92 match the PTAP/PSAP motif motif; it reads PSAP.

It belongs to the arenaviridae Z protein family. As to quaternary structure, interacts with protein NP; this interaction probably directs the encapsidated genome to budding sites. Interacts (via RING domain) with polymerase L; this interaction inhibits viral transcription and replication, Z partially blocks the product exit tunnel for the releasing nascent RNA product. Interacts with the glycoprotein complex; this interaction plays a role in virion budding. Interacts with host eIF4E; this interaction results in eIF4E reduced affinity for its substrate, the 5'-m7 G cap structure. Interacts (via late-budding domain) with host TSG101; this interaction is essential for budding and release of viral particles. Interacts with host RPLP0; this interaction may serve to load ribosome-like particles inside the virion. Interacts with host PML; this interaction induces PML bodies redistribution in the cytoplasm upon viral infection. In terms of processing, myristoylation is required for the role of RING finger protein Z in assembly and budding.

It is found in the virion. The protein localises to the host cytoplasm. Its subcellular location is the host perinuclear region. The protein resides in the host cell membrane. In terms of biological role, plays a crucial role in virion assembly and budding. Expressed late in the virus life cycle, it acts as an inhibitor of viral transcription and RNA synthesis by interacting with the viral polymerase L. Presumably recruits the NP encapsidated genome to cellular membranes at budding sites via direct interaction with NP. Plays critical roles in the final steps of viral release by interacting with host TSG101, a member of the vacuolar protein-sorting pathway and using other cellular host proteins involved in vesicle formation pathway. The budding of the virus progeny occurs after association of protein Z with the viral glycoprotein complex SSP-GP1-GP2 at the cell periphery, step that requires myristoylation of protein Z. Also selectively represses protein production by associating with host eIF4E. In cell-based minigenome assay, has an inhibitory effect on the ribonucleoprotein machinery (vRNP), which is responsible for the replication and transcription of the viral genome. In Calomys callosus (Large vesper mouse), this protein is RING finger protein Z.